The chain runs to 118 residues: Ig heavy chain V region X24 (118 aa).

The 111-residue stretch at 1–111 (EVKLLESGGG…GYFDYWGQGT (111 aa)) folds into the Ig-like domain.

The protein is Ig heavy chain V region X24 of Mus musculus (Mouse).